The sequence spans 182 residues: Adenine phosphoribosyltransferase (182 aa).

Belongs to the purine/pyrimidine phosphoribosyltransferase family. Homodimer.

It is found in the cytoplasm. The catalysed reaction is AMP + diphosphate = 5-phospho-alpha-D-ribose 1-diphosphate + adenine. The protein operates within purine metabolism; AMP biosynthesis via salvage pathway; AMP from adenine: step 1/1. Its function is as follows. Catalyzes a salvage reaction resulting in the formation of AMP, that is energically less costly than de novo synthesis. This chain is Adenine phosphoribosyltransferase, found in Streptomyces galbus.